A 367-amino-acid polypeptide reads, in one-letter code: Probable alcohol dehydrogenase adh (367 aa).

Cys-43, His-64, Cys-97, Cys-100, Cys-103, Cys-111, and Asn-163 together coordinate Zn(2+).

The protein belongs to the zinc-containing alcohol dehydrogenase family. Zn(2+) serves as cofactor.

The enzyme catalyses a primary alcohol + NAD(+) = an aldehyde + NADH + H(+). The catalysed reaction is a secondary alcohol + NAD(+) = a ketone + NADH + H(+). This chain is Probable alcohol dehydrogenase adh (adh), found in Mycobacterium tuberculosis (strain CDC 1551 / Oshkosh).